A 1941-amino-acid chain; its full sequence is Myosin-2 (1941 aa).

One can recognise a Myosin N-terminal SH3-like domain in the interval 33 to 82 (DAKTSVFVAEPKESFVKGTIQSREGGKVTVKTEGGATLTVKDDQVFPMNP). Thr64 and Thr69 each carry phosphothreonine. One can recognise a Myosin motor domain in the interval 86–784 (DKIEDMAMMT…LLGLLEEMRD (699 aa)). Lys130 carries the post-translational modification N6,N6,N6-trimethyllysine. 179–186 (GESGAGKT) lines the ATP pocket. The residue at position 389 (Tyr389) is a Phosphotyrosine. Residue Ser392 is modified to Phosphoserine. Thr419 bears the Phosphothreonine mark. At Ser625 the chain carries Phosphoserine. The actin-binding stretch occupies residues 661–683 (LNKLMTNLRSTHPHFVRCIIPNE). A Pros-methylhistidine modification is found at His759. Residues 763 to 777 (KFGHTKVFFKAGLLG) form an actin-binding region. The IQ domain occupies 787–816 (LAQLITRTQARCRGFLARVEYQRMVERREA). Residues 845-1941 (LLKSAETEKE…EVHTKVISEE (1097 aa)) adopt a coiled-coil conformation. 2 positions are modified to phosphoserine: Ser1094 and Ser1098. Disordered regions lie at residues 1128-1149 (IEAE…SREL) and 1155-1174 (RLEE…KKRE). A compositionally biased stretch (basic and acidic residues) spans 1130-1149 (AERASRAKAEKQRSDLSREL). A phosphoserine mark is found at Ser1164 and Ser1239. Thr1243 is modified (phosphothreonine). Ser1245 carries the post-translational modification Phosphoserine. Thr1257 bears the Phosphothreonine mark. A Phosphoserine modification is found at Ser1263. A Phosphothreonine modification is found at Thr1288. A phosphoserine mark is found at Ser1290, Ser1294, Ser1305, and Ser1308. Position 1469 is a phosphothreonine (Thr1469). Residue Ser1476 is modified to Phosphoserine. Tyr1494 carries the phosphotyrosine modification. Ser1497 carries the post-translational modification Phosphoserine. A Phosphothreonine modification is found at Thr1503. Ser1516 carries the post-translational modification Phosphoserine. Thr1519 is subject to Phosphothreonine. Phosphoserine is present on residues Ser1556, Ser1576, Ser1602, Ser1605, Ser1716, and Ser1728. Thr1732 and Thr1738 each carry phosphothreonine. Position 1741 is a phosphoserine (Ser1741).

Belongs to the TRAFAC class myosin-kinesin ATPase superfamily. Myosin family. As to quaternary structure, muscle myosin is a hexameric protein that consists of 2 heavy chain subunits (MHC), 2 alkali light chain subunits (MLC) and 2 regulatory light chain subunits (MLC-2). Interacts with GCSAM.

The protein localises to the cytoplasm. It is found in the myofibril. Its function is as follows. Myosins are actin-based motor molecules with ATPase activity essential for muscle contraction. This is Myosin-2 from Homo sapiens (Human).